The sequence spans 62 residues: Photosystem II reaction center protein Z (62 aa).

The next 2 membrane-spanning stretches (helical) occupy residues 8–28 (AVFALIVTSSILLISVPVVFA) and 41–61 (FSGTSLWIGLVFLVGILNSLI).

It belongs to the PsbZ family. In terms of assembly, PSII is composed of 1 copy each of membrane proteins PsbA, PsbB, PsbC, PsbD, PsbE, PsbF, PsbH, PsbI, PsbJ, PsbK, PsbL, PsbM, PsbT, PsbY, PsbZ, Psb30/Ycf12, at least 3 peripheral proteins of the oxygen-evolving complex and a large number of cofactors. It forms dimeric complexes.

It is found in the plastid. The protein localises to the chloroplast thylakoid membrane. Its function is as follows. May control the interaction of photosystem II (PSII) cores with the light-harvesting antenna, regulates electron flow through the 2 photosystem reaction centers. PSII is a light-driven water plastoquinone oxidoreductase, using light energy to abstract electrons from H(2)O, generating a proton gradient subsequently used for ATP formation. The protein is Photosystem II reaction center protein Z of Pisum sativum (Garden pea).